Consider the following 415-residue polypeptide: Intron-encoded DNA endonuclease aI3 (415 aa).

The interval 1-81 is COX1 exons 1 to 3 encoded; that stretch reads MVQRWLYSTN…MPALIGGFGN (81 aa). Transmembrane regions (helical) follow at residues 16–36 and 57–77; these read VLYF…SLII and VLVV…ALIG. Residues 82–415 form a COX1 intron 3 encoded region; that stretch reads QKRYESNNNN…HLKNTYLENK (334 aa).

It in the C-terminal section; belongs to the LAGLIDADG endonuclease family. Mg(2+) is required as a cofactor. In terms of processing, the mature protein may arise from proteolytic cleavage of an in-frame translation of some COX1 exons plus the intron containing the aI3 open reading frame.

It is found in the mitochondrion. The protein localises to the membrane. Mitochondrial DNA endonuclease involved in intron homing. It introduces a specific double-strand break in the DNA of the COX1 gene and thus mediates the insertion of an intron, containing its own coding sequence (group I intron), into an intronless gene. Recognizes with high specificity and cleaves the sequence 5'-GGTTTTGGTAACTATTTATTAC-3'. The protein is Intron-encoded DNA endonuclease aI3 (AI3) of Saccharomyces cerevisiae (strain ATCC 204508 / S288c) (Baker's yeast).